The sequence spans 304 residues: Uricase (304 aa).

An N-acetylalanine modification is found at A2. An N6-acetyllysine; alternate mark is found at K10 and K23. K10 and K23 each carry N6-succinyllysine; alternate. The active-site Charge relay system is the K23. Residues K27 and K36 each carry the N6-acetyllysine modification. Residues S39 and S63 each carry the phosphoserine modification. The active-site Charge relay system is T68. T68 and D69 together coordinate urate. K118, K122, and K164 each carry N6-acetyllysine. Residue F170 participates in urate binding. N6-acetyllysine occurs at positions 175 and 185. A urate-binding site is contributed by R187. Residues K221 and K228 each carry the N6-acetyllysine; alternate modification. N6-succinyllysine; alternate occurs at positions 221 and 228. S232 is subject to Phosphoserine. Residues V235, Q236, and N262 each contribute to the urate site. H264 functions as the Charge relay system in the catalytic mechanism. K278 is subject to N6-acetyllysine. Phosphotyrosine is present on Y289. Positions S302 to L304 match the Microbody targeting signal motif.

The protein belongs to the uricase family.

Its subcellular location is the peroxisome. It catalyses the reaction urate + O2 + H2O = 5-hydroxyisourate + H2O2. Its pathway is purine metabolism; urate degradation; (S)-allantoin from urate: step 1/3. Catalyzes the oxidation of uric acid to 5-hydroxyisourate, which is further processed to form (S)-allantoin. This Macaca mulatta (Rhesus macaque) protein is Uricase (UOX).